Reading from the N-terminus, the 816-residue chain is H(+)/Cl(-) exchange transporter 5 (816 aa).

Residues 1 to 124 (MAMWQGAMDN…WALIHSVSDA (124 aa)) lie on the Cytoplasmic side of the membrane. A run of 2 helical transmembrane segments spans residues 125-162 (FSGW…ICTG) and 208-231 (VNYF…VKVF). The Selectivity filter part_1 motif lies at 237–241 (GSGIP). Serine 238 is a chloride binding site. Residues 240-247 (IPEIKTIL) constitute an intramembrane region (helical). 2 consecutive transmembrane segments (helical) span residues 256–275 (LGKW…VSSG) and 281–300 (EGPL…HCFN). A Selectivity filter part_2 motif is present at residues 279–283 (GKEGP). Intramembrane regions (helical) lie at residues 312 to 324 (VLSA…VSVA) and 328 to 336 (PIGGVLFSL). The next 5 membrane-spanning stretches (helical) occupy residues 348–366 (LWRS…RSIN), 389–414 (LVPF…IAWC), 422–442 (LGKY…ILAF), 498–518 (MWQL…TFGM), and 523–542 (GLFI…LGVG). The Selectivity filter part_3 signature appears at 523–527 (GLFIP). Phenylalanine 525 provides a ligand contact to chloride. An intramembrane region (helical) is located at residues 570–584 (GLYAMVGAAACLGGV). Positions 585-587 (TRM) form an intramembrane region, note=Loop between two helices. Residues 588 to 599 (TVSLVVIMFELT) constitute an intramembrane region (helical). An intramembrane region (note=Loop between two helices) is located at residues 600-604 (GGLEY). Residues 605 to 622 (IVPLMAAAMTSKWVADAL) traverse the membrane as a helical segment. Topologically, residues 623 to 816 (GREGIYDAHI…NQDPDSILFN (194 aa)) are cytoplasmic. Tyrosine 628 serves as a coordination point for chloride. 2 CBS domains span residues 656 to 720 (MKPR…ARKK) and 752 to 812 (ILDL…DPDS). ATP-binding positions include threonine 666, 687 to 689 (YSG), and 794 to 797 (TKKD).

It belongs to the chloride channel (TC 2.A.49) family. ClC-5/CLCN5 subfamily. As to quaternary structure, interacts with NEDD4 and NEDD4L. In terms of processing, ubiquitinated by NEDD4L in the presence of albumin; which promotes endocytosis and proteasomal degradation.

The protein localises to the golgi apparatus membrane. Its subcellular location is the endosome membrane. It localises to the cell membrane. It carries out the reaction 2 chloride(in) + H(+)(out) = 2 chloride(out) + H(+)(in). In terms of biological role, proton-coupled chloride transporter. Functions as antiport system and exchanges chloride ions against protons. Important for normal acidification of the endosome lumen. May play an important role in renal tubular function. The CLC channel family contains both chloride channels and proton-coupled anion transporters that exchange chloride or another anion for protons. The absence of conserved gating glutamate residues is typical for family members that function as channels. The sequence is that of H(+)/Cl(-) exchange transporter 5 (CLCN5) from Pongo abelii (Sumatran orangutan).